The chain runs to 123 residues: Protein Rev (123 aa).

Phosphoserine; by host CK2 is present on S5. The tract at residues 18–26 is homomultimerization; it reads IIKTLYQSN. 2 disordered regions span residues 24–50 and 79–123; these read QSNP…ARQR and EGLS…GTKE. The Nuclear localization signal and RNA-binding (RRE) motif lies at 34–50; that stretch reads TRQARKNRRRRWRARQR. Residues 36 to 50 are compositionally biased toward basic residues; the sequence is QARKNRRRRWRARQR. A Nuclear export signal and binding to XPO1 motif is present at residues 73–84; the sequence is FQLPPLEGLSLD. S92 carries the post-translational modification Phosphoserine; by host. A compositionally biased stretch (low complexity) spans 93 to 105; that stretch reads GTQQPQGTETGVG.

It belongs to the HIV-1 REV protein family. As to quaternary structure, homomultimer; when bound to the RRE. Multimeric assembly is essential for activity and may involve XPO1. Binds to human KPNB1, XPO1, TNPO1, RANBP5 and IPO7. Interacts with the viral Integrase. Interacts with human KHDRBS1. Interacts with human NAP1; this interaction decreases Rev multimerization and stimulates its activity. Interacts with human DEAD-box helicases DDX3 and DDX24; these interactions may serve for viral RNA export to the cytoplasm and packaging, respectively. Interacts with human PSIP1; this interaction may inhibit HIV-1 DNA integration by promoting dissociation of the Integrase-LEDGF/p75 complex. Asymmetrically arginine dimethylated at one site by host PRMT6. Methylation impairs the RNA-binding activity and export of viral RNA from the nucleus to the cytoplasm. In terms of processing, phosphorylated by protein kinase CK2. Presence of, and maybe binding to the N-terminus of the regulatory beta subunit of CK2 is necessary for CK2-mediated Rev's phosphorylation.

It localises to the host nucleus. The protein localises to the host nucleolus. The protein resides in the host cytoplasm. In terms of biological role, escorts unspliced or incompletely spliced viral pre-mRNAs (late transcripts) out of the nucleus of infected cells. These pre-mRNAs carry a recognition sequence called Rev responsive element (RRE) located in the env gene, that is not present in fully spliced viral mRNAs (early transcripts). This function is essential since most viral proteins are translated from unspliced or partially spliced pre-mRNAs which cannot exit the nucleus by the pathway used by fully processed cellular mRNAs. Rev itself is translated from a fully spliced mRNA that readily exits the nucleus. Rev's nuclear localization signal (NLS) binds directly to KPNB1/Importin beta-1 without previous binding to KPNA1/Importin alpha-1. KPNB1 binds to the GDP bound form of RAN (Ran-GDP) and targets Rev to the nucleus. In the nucleus, the conversion from Ran-GDP to Ran-GTP dissociates Rev from KPNB1 and allows Rev's binding to the RRE in viral pre-mRNAs. Rev multimerization on the RRE via cooperative assembly exposes its nuclear export signal (NES) to the surface. Rev can then form a complex with XPO1/CRM1 and Ran-GTP, leading to nuclear export of the complex. Conversion from Ran-GTP to Ran-GDP mediates dissociation of the Rev/RRE/XPO1/RAN complex, so that Rev can return to the nucleus for a subsequent round of export. Beside KPNB1, also seems to interact with TNPO1/Transportin-1, RANBP5/IPO5 and IPO7/RANBP7 for nuclear import. The nucleoporin-like HRB/RIP is an essential cofactor that probably indirectly interacts with Rev to release HIV RNAs from the perinuclear region to the cytoplasm. The chain is Protein Rev from Human immunodeficiency virus type 1 group M subtype G (isolate 92NG083) (HIV-1).